Reading from the N-terminus, the 457-residue chain is Asparagine--tRNA ligase (457 aa).

It belongs to the class-II aminoacyl-tRNA synthetase family. In terms of assembly, homodimer.

It is found in the cytoplasm. The enzyme catalyses tRNA(Asn) + L-asparagine + ATP = L-asparaginyl-tRNA(Asn) + AMP + diphosphate + H(+). This chain is Asparagine--tRNA ligase, found in Phytoplasma australiense.